A 242-amino-acid chain; its full sequence is Ribonuclease PH (242 aa).

Phosphate-binding positions include arginine 90 and 128 to 130 (GTR).

The protein belongs to the RNase PH family. In terms of assembly, homohexameric ring arranged as a trimer of dimers.

It carries out the reaction tRNA(n+1) + phosphate = tRNA(n) + a ribonucleoside 5'-diphosphate. Functionally, phosphorolytic 3'-5' exoribonuclease that plays an important role in tRNA 3'-end maturation. Removes nucleotide residues following the 3'-CCA terminus of tRNAs; can also add nucleotides to the ends of RNA molecules by using nucleoside diphosphates as substrates, but this may not be physiologically important. Probably plays a role in initiation of 16S rRNA degradation (leading to ribosome degradation) during starvation. The sequence is that of Ribonuclease PH from Nocardioides sp. (strain ATCC BAA-499 / JS614).